We begin with the raw amino-acid sequence, 305 residues long: Protoheme IX farnesyltransferase (305 aa).

Transmembrane regions (helical) follow at residues 28–48, 52–72, 102–122, 123–143, 150–170, 176–196, 221–241, 243–263, and 282–302; these read VVLL…PGIV, VFLF…AINH, IFAA…VNLL, TALL…LYLK, IVIG…AVTG, ALIL…ALAI, INIL…FVIM, SGWI…YWAI, and IWYL…YLAL.

This sequence belongs to the UbiA prenyltransferase family. Protoheme IX farnesyltransferase subfamily.

It is found in the cell inner membrane. It carries out the reaction heme b + (2E,6E)-farnesyl diphosphate + H2O = Fe(II)-heme o + diphosphate. It participates in porphyrin-containing compound metabolism; heme O biosynthesis; heme O from protoheme: step 1/1. In terms of biological role, converts heme B (protoheme IX) to heme O by substitution of the vinyl group on carbon 2 of heme B porphyrin ring with a hydroxyethyl farnesyl side group. The sequence is that of Protoheme IX farnesyltransferase from Coxiella burnetii (strain CbuK_Q154) (Coxiella burnetii (strain Q154)).